The following is a 753-amino-acid chain: Eukaryotic translation initiation factor 3 subunit B (753 aa).

One can recognise an RRM domain in the interval 42–129 (TMLVVDNIPI…NVLHVNRFGD (88 aa)). 5 WD repeats span residues 142–185 (DLPS…WWNG), 203–241 (NSKWGELYLQWSTMGTYLASLHRVGVALWSGPKLDGPIG), 321–362 (DTQS…LLDR), 537–580 (LDSK…DERR), and 595–640 (GEHY…LLHE). Residues 723–753 (KSKAKIDVKGQEARVEEWVEELIDETEELSM) adopt a coiled-coil conformation.

Belongs to the eIF-3 subunit B family. As to quaternary structure, component of the eukaryotic translation initiation factor 3 (eIF-3) complex.

Its subcellular location is the cytoplasm. Functionally, RNA-binding component of the eukaryotic translation initiation factor 3 (eIF-3) complex, which is involved in protein synthesis of a specialized repertoire of mRNAs and, together with other initiation factors, stimulates binding of mRNA and methionyl-tRNAi to the 40S ribosome. The eIF-3 complex specifically targets and initiates translation of a subset of mRNAs involved in cell proliferation. The sequence is that of Eukaryotic translation initiation factor 3 subunit B from Cryptococcus neoformans var. neoformans serotype D (strain B-3501A) (Filobasidiella neoformans).